Consider the following 585-residue polypeptide: A-type ATP synthase subunit A (585 aa).

232–239 (GPFGSGKT) serves as a coordination point for ATP.

This sequence belongs to the ATPase alpha/beta chains family. As to quaternary structure, has multiple subunits with at least A(3), B(3), C, D, E, F, H, I and proteolipid K(x).

It is found in the cell membrane. The enzyme catalyses ATP + H2O + 4 H(+)(in) = ADP + phosphate + 5 H(+)(out). In terms of biological role, component of the A-type ATP synthase that produces ATP from ADP in the presence of a proton gradient across the membrane. The A chain is the catalytic subunit. The sequence is that of A-type ATP synthase subunit A from Methanosphaera stadtmanae (strain ATCC 43021 / DSM 3091 / JCM 11832 / MCB-3).